Reading from the N-terminus, the 246-residue chain is E3 ubiquitin-protein ligase MARCHF2 (246 aa).

Residues 56 to 116 (GTQSDGPICR…ELCHTEFAVE (61 aa)) form an RING-CH-type zinc finger. Cys-64, Cys-67, Cys-80, Cys-82, His-90, Cys-93, Cys-106, and Cys-109 together coordinate Zn(2+). Helical transmembrane passes span 138-158 (LFCDMVCFLFITPLAAISGWL) and 175-195 (AVGLIALTIALFTIYVLWTLV).

The protein resides in the endoplasmic reticulum membrane. Its subcellular location is the lysosome membrane. The protein localises to the endosome membrane. The enzyme catalyses S-ubiquitinyl-[E2 ubiquitin-conjugating enzyme]-L-cysteine + [acceptor protein]-L-lysine = [E2 ubiquitin-conjugating enzyme]-L-cysteine + N(6)-ubiquitinyl-[acceptor protein]-L-lysine.. The protein operates within protein modification; protein ubiquitination. E3 ubiquitin-protein ligase which may be involved in endosomal trafficking. E3 ubiquitin ligases accept ubiquitin from an E2 ubiquitin-conjugating enzyme in the form of a thioester and then directly transfer the ubiquitin to targeted substrates. This chain is E3 ubiquitin-protein ligase MARCHF2 (marchf2), found in Xenopus tropicalis (Western clawed frog).